The sequence spans 406 residues: Tryptophan synthase beta chain (406 aa).

K99 is modified (N6-(pyridoxal phosphate)lysine).

Belongs to the TrpB family. As to quaternary structure, tetramer of two alpha and two beta chains. Pyridoxal 5'-phosphate serves as cofactor.

The catalysed reaction is (1S,2R)-1-C-(indol-3-yl)glycerol 3-phosphate + L-serine = D-glyceraldehyde 3-phosphate + L-tryptophan + H2O. The protein operates within amino-acid biosynthesis; L-tryptophan biosynthesis; L-tryptophan from chorismate: step 5/5. The beta subunit is responsible for the synthesis of L-tryptophan from indole and L-serine. The chain is Tryptophan synthase beta chain from Brucella melitensis biotype 2 (strain ATCC 23457).